The primary structure comprises 616 residues: ATP-dependent zinc metalloprotease FtsH (616 aa).

Residues 1–8 (MRNLFKTA) are Cytoplasmic-facing. The helical transmembrane segment at 9–29 (TIYILIALVILLLVDIFSGGL) threads the bilayer. Topologically, residues 30-114 (SYNQFFSNLS…VTKEPPQVPW (85 aa)) are extracellular. A helical membrane pass occupies residues 115-135 (WLSTFLPMLIFAGLMIFVWIF). At 136–616 (MLQQTQGGGS…VFEDAQPQLV (481 aa)) the chain is on the cytoplasmic side. 208 to 215 (GPPGTGKT) lines the ATP pocket. Residue histidine 430 participates in Zn(2+) binding. Residue glutamate 431 is part of the active site. The Zn(2+) site is built by histidine 434 and aspartate 506.

It in the central section; belongs to the AAA ATPase family. The protein in the C-terminal section; belongs to the peptidase M41 family. In terms of assembly, homohexamer. It depends on Zn(2+) as a cofactor.

The protein localises to the cell membrane. Acts as a processive, ATP-dependent zinc metallopeptidase for both cytoplasmic and membrane proteins. Plays a role in the quality control of integral membrane proteins. In Caldicellulosiruptor bescii (strain ATCC BAA-1888 / DSM 6725 / KCTC 15123 / Z-1320) (Anaerocellum thermophilum), this protein is ATP-dependent zinc metalloprotease FtsH.